The sequence spans 238 residues: Large ribosomal subunit protein uL1 (238 aa).

The protein belongs to the universal ribosomal protein uL1 family. Part of the 50S ribosomal subunit.

In terms of biological role, binds directly to 23S rRNA. The L1 stalk is quite mobile in the ribosome, and is involved in E site tRNA release. Protein L1 is also a translational repressor protein, it controls the translation of the L11 operon by binding to its mRNA. The sequence is that of Large ribosomal subunit protein uL1 from Trichormus variabilis (strain ATCC 29413 / PCC 7937) (Anabaena variabilis).